A 376-amino-acid chain; its full sequence is 2-hydroxypropyl-CoM lyase (376 aa).

Zn(2+)-binding residues include His-218, Cys-220, and Cys-341.

The protein belongs to the vitamin-B12 independent methionine synthase family. Homohexamer. Component I of the aliphatic epoxide carboxylation complex together with components II, III and IV. Zn(2+) is required as a cofactor.

The catalysed reaction is (R)-2-hydroxypropyl-coenzyme M = (R)-1,2-epoxypropane + coenzyme M. It carries out the reaction (S)-2-hydroxypropyl-coenzyme M = (S)-1,2-epoxypropane + coenzyme M. It participates in alkene metabolism; propylene degradation. Its activity is regulated as follows. Inhibited by methylepoxypropane. Inhibited by the zinc chelator 4-(2-pyridylazo)resorcinol (PAR), in the presence of p- (hydroxymercuri)benzenesulfonic acid (PMPS), and by EDTA. Not inhibited by the coenzyme M analog 2-bromoethanesulfonate (BES). Its function is as follows. Involved in aliphatic epoxide carboxylation. Catalyzes the addition of coenzyme M (CoM) to either R- or S-epoxypropane to form the thioether conjugate 2-hydroxypropyl-CoM. Catalyzes the reaction of CoM with R-epoxypropane at a rate approximately twice of that with S-epoxypropane. The CoM analogs 2-mercaptopropionate, 2-mercaptoethanol and cysteine substitute poorly for CoM as the thiol substrate. The polypeptide is 2-hydroxypropyl-CoM lyase (Xanthobacter autotrophicus (strain ATCC BAA-1158 / Py2)).